A 539-amino-acid chain; its full sequence is Copine-C (539 aa).

C2 domains follow at residues Met1 to Ala120 and Val128 to Asn251. Ca(2+) contacts are provided by Leu23, Asp24, Asp30, Asp83, Asp85, and Asp98. One can recognise a VWFA domain in the interval Ser290–Ile507.

The protein belongs to the copine family. The cofactor is Ca(2+).

This Dictyostelium discoideum (Social amoeba) protein is Copine-C (cpnC).